The sequence spans 478 residues: Cytochrome c biogenesis protein CcsB (478 aa).

The next 3 helical transmembrane spans lie at 30 to 50 (LRLAIGLFLAIALLSAVGTVI), 89 to 109 (TSWFLALLILFGSSLAACSLT), and 175 to 195 (FGPILVHVSLLLILLGAIWGS). The interval 453 to 478 (LSSPPSPAKEPPPAARVGGTESLANG) is disordered. A compositionally biased stretch (pro residues) spans 456–466 (PPSPAKEPPPA).

This sequence belongs to the Ccs1/CcsB family. May interact with CcsA.

The protein localises to the cellular thylakoid membrane. Required during biogenesis of c-type cytochromes (cytochrome c6 and cytochrome f) at the step of heme attachment. This Synechococcus sp. (strain JA-3-3Ab) (Cyanobacteria bacterium Yellowstone A-Prime) protein is Cytochrome c biogenesis protein CcsB.